The sequence spans 93 residues: Large ribosomal subunit protein bL31B (93 aa).

It belongs to the bacterial ribosomal protein bL31 family. Type B subfamily. Part of the 50S ribosomal subunit.

This is Large ribosomal subunit protein bL31B from Psychrobacter arcticus (strain DSM 17307 / VKM B-2377 / 273-4).